The following is a 200-amino-acid chain: Nascent polypeptide-associated complex subunit alpha (200 aa).

Positions 1 to 19 (MADPRVEELPEEEVKKTQV) are enriched in basic and acidic residues. Disordered regions lie at residues 1–54 (MADP…NEKK) and 118–165 (AAQQ…EDKD). A compositionally biased stretch (acidic residues) spans 20–34 (EDLDNSSDDESDIEA). Positions 49 to 114 (SRNEKKARKA…AKIEDLNASA (66 aa)) constitute an NAC-A/B domain. Residues 127-146 (AEHDHAGHTHEHEEAGKAKE) are compositionally biased toward basic and acidic residues. Residues 147–160 (EEEEDEGEEVDAEG) are compositionally biased toward acidic residues. A UBA domain is found at 161–200 (IEDKDIELVMTQANVSRKKAIKALKENDNDIVNSIMALSI).

The protein belongs to the NAC-alpha family. In terms of assembly, part of the nascent polypeptide-associated complex (NAC), consisting of npc-1/egd2 and npc-2/egd1. NAC associates with ribosomes via npc-2/egd1.

The protein localises to the cytoplasm. The protein resides in the nucleus. In terms of biological role, component of the nascent polypeptide-associated complex (NAC), a dynamic component of the ribosomal exit tunnel, protecting the emerging polypeptides from interaction with other cytoplasmic proteins to ensure appropriate nascent protein targeting. The NAC complex also promotes mitochondrial protein import by enhancing productive ribosome interactions with the outer mitochondrial membrane and blocks the inappropriate interaction of ribosomes translating non-secretory nascent polypeptides with translocation sites in the membrane of the endoplasmic reticulum. Npc-1/egd2 may also be involved in transcription regulation. This chain is Nascent polypeptide-associated complex subunit alpha (npc-1), found in Neurospora crassa (strain ATCC 24698 / 74-OR23-1A / CBS 708.71 / DSM 1257 / FGSC 987).